The primary structure comprises 390 residues: Chorismate synthase (390 aa).

Positions 39 and 45 each coordinate NADP(+). FMN is bound by residues 132 to 134 (RSS), 253 to 254 (NA), Gly-298, 313 to 317 (KPIPT), and Arg-339.

Belongs to the chorismate synthase family. In terms of assembly, homotetramer. It depends on FMNH2 as a cofactor.

The enzyme catalyses 5-O-(1-carboxyvinyl)-3-phosphoshikimate = chorismate + phosphate. It functions in the pathway metabolic intermediate biosynthesis; chorismate biosynthesis; chorismate from D-erythrose 4-phosphate and phosphoenolpyruvate: step 7/7. In terms of biological role, catalyzes the anti-1,4-elimination of the C-3 phosphate and the C-6 proR hydrogen from 5-enolpyruvylshikimate-3-phosphate (EPSP) to yield chorismate, which is the branch point compound that serves as the starting substrate for the three terminal pathways of aromatic amino acid biosynthesis. This reaction introduces a second double bond into the aromatic ring system. The sequence is that of Chorismate synthase from Bacillus subtilis (strain 168).